A 403-amino-acid chain; its full sequence is Acetate kinase (403 aa).

Asn-7 contributes to the Mg(2+) binding site. ATP is bound at residue Lys-14. Arg-97 provides a ligand contact to substrate. Asp-154 functions as the Proton donor/acceptor in the catalytic mechanism. ATP-binding positions include 213–217 (HLGNG), 287–289 (DMR), and 335–339 (GIGEN). Glu-388 provides a ligand contact to Mg(2+).

Belongs to the acetokinase family. As to quaternary structure, homodimer. Mg(2+) is required as a cofactor. Requires Mn(2+) as cofactor.

It localises to the cytoplasm. The catalysed reaction is acetate + ATP = acetyl phosphate + ADP. The protein operates within metabolic intermediate biosynthesis; acetyl-CoA biosynthesis; acetyl-CoA from acetate: step 1/2. Functionally, catalyzes the formation of acetyl phosphate from acetate and ATP. Can also catalyze the reverse reaction. This is Acetate kinase from Synechococcus sp. (strain JA-2-3B'a(2-13)) (Cyanobacteria bacterium Yellowstone B-Prime).